Consider the following 1675-residue polypeptide: Clathrin heavy chain 1 (1675 aa).

N-acetylalanine is present on alanine 2. The segment at 2–479 (AQILPIRFQE…VDPTLALSVY (478 aa)) is globular terminal domain. WD40-like repeat regions lie at residues 24 to 67 (NIGF…RPIS), 68 to 107 (ADSAIMNPASKVIALKAGKTLQIFNIEMKSKMKAHTMTDD), 108 to 149 (VTFW…SSLA), 150 to 195 (GCQI…QPIE), 196 to 257 (GHAA…PEAQ), 258 to 301 (NDFP…ISGE), and 302 to 330 (TIFVTAPHEATAGIIGVNRKGQVLSVCVE). A Phosphoserine modification is found at serine 67. At threonine 105 the chain carries Phosphothreonine. The residue at position 184 (tyrosine 184) is a Phosphotyrosine. Threonine 394 is modified (phosphothreonine). The segment at 449 to 465 (EKWLKEDKLECSEELGD) is binding site for the uncoating ATPase, involved in lattice disassembly. A flexible linker region spans residues 480–523 (LRANVPNKVIQCFAETGQVQKIVLYAKKVGYTPDWIFLLRNVMR). Positions 524 to 634 (ISPDQGQQFA…RALEHFTDLY (111 aa)) are distal segment. Positions 524 to 1675 (ISPDQGQQFA…QPQPGFGYSM (1152 aa)) are heavy chain arm. 7 CHCR repeats span residues 537–683 (VQDE…QIWV), 686–828 (ASKY…SEDV), 833–972 (ILVV…PLID), 979–1124 (LSET…VKEA), 1128–1269 (YIKA…FRLA), 1274–1420 (LHIV…LLLN), and 1423–1566 (LMVL…RECF). Tyrosine 634 carries the phosphotyrosine modification. A proximal segment region spans residues 639 to 1675 (AVVHTHLLNP…QPQPGFGYSM (1037 aa)). N6-succinyllysine is present on lysine 737. N6-acetyllysine is present on lysine 856. Phosphotyrosine is present on tyrosine 899. Serine 1167 carries the post-translational modification Phosphoserine. Phosphotyrosine is present on tyrosine 1206. Residues 1213 to 1522 (AAKLLYNNVS…YLFKGNNRWK (310 aa)) form an involved in binding clathrin light chain region. The residue at position 1229 (serine 1229) is a Phosphoserine. Lysine 1441 bears the N6-acetyllysine; alternate mark. Residue lysine 1441 is modified to N6-succinyllysine; alternate. 2 positions are modified to phosphotyrosine: tyrosine 1477 and tyrosine 1487. Serine 1494 carries the post-translational modification Phosphoserine. Lysine 1501 is modified (N6-acetyllysine). The trimerization stretch occupies residues 1550 to 1675 (AEELLQWFLQ…QPQPGFGYSM (126 aa)).

Belongs to the clathrin heavy chain family. As to quaternary structure, clathrin triskelions, composed of 3 heavy chains and 3 light chains, are the basic subunits of the clathrin coat. In the presence of light chains, hub assembly is influenced by both the pH and the concentration of calcium. Interacts with HIP1. Interacts with DENND1A, DENND1B and DENND1C. Interacts with OCRL. Interacts with ERBB2. Interacts with FKBP6. Interacts with CKAP5 and TACC3 forming the TACC3/ch-TOG/clathrin complex located at spindle inter-microtubules bridges; the complex implicates clathrin triskelions; TACC3 and CLTC are proposed to form a composite microtubule interaction surface. Interacts with ATG16L1 (via N-terminus). Interacts with RFTN1; the interaction occurs in response to pathogens. Interacts with USP2 isoform 2. Interacts with TMEM106B (via N-terminus). Interacts with DNAJC6; this interaction produces a local change in heavy-chain contacts, creating a detectable global distortion of the clathrin coat and leads to the recruitment of HSPA8.

It is found in the cytoplasmic vesicle membrane. Its subcellular location is the membrane. The protein resides in the coated pit. The protein localises to the melanosome. It localises to the cytoplasm. It is found in the cytoskeleton. Its subcellular location is the spindle. Clathrin is the major protein of the polyhedral coat of coated pits and vesicles. Two different adapter protein complexes link the clathrin lattice either to the plasma membrane or to the trans-Golgi network. Acts as a component of the TACC3/ch-TOG/clathrin complex proposed to contribute to stabilization of kinetochore fibers of the mitotic spindle by acting as inter-microtubule bridge. The TACC3/ch-TOG/clathrin complex is required for the maintenance of kinetochore fiber tension. Plays a role in early autophagosome formation. Interaction with DNAJC6 mediates the recruitment of HSPA8 to the clathrin lattice and creates local destabilization of the lattice promoting uncoating. The sequence is that of Clathrin heavy chain 1 from Rattus norvegicus (Rat).